The sequence spans 207 residues: Dephospho-CoA kinase (207 aa).

The region spanning 10–207 (ILGLTGGIGS…FYLTLRGGQS (198 aa)) is the DPCK domain. Residue 18–23 (GSGKSA) coordinates ATP.

It belongs to the CoaE family.

The protein resides in the cytoplasm. The catalysed reaction is 3'-dephospho-CoA + ATP = ADP + CoA + H(+). Its pathway is cofactor biosynthesis; coenzyme A biosynthesis; CoA from (R)-pantothenate: step 5/5. In terms of biological role, catalyzes the phosphorylation of the 3'-hydroxyl group of dephosphocoenzyme A to form coenzyme A. In Pseudomonas syringae pv. syringae (strain B728a), this protein is Dephospho-CoA kinase.